A 139-amino-acid chain; its full sequence is Small ribosomal subunit protein uS11 (139 aa).

The interval 118 to 139 is disordered; that stretch reads EDVTPIPHDGTRPKGGRRGRRV.

This sequence belongs to the universal ribosomal protein uS11 family. Part of the 30S ribosomal subunit.

Located on the platform of the 30S subunit. This Thermococcus sibiricus (strain DSM 12597 / MM 739) protein is Small ribosomal subunit protein uS11.